The sequence spans 130 residues: Small ribosomal subunit protein uS8 (130 aa).

This sequence belongs to the universal ribosomal protein uS8 family. In terms of assembly, part of the 30S ribosomal subunit. Contacts proteins S5 and S12.

One of the primary rRNA binding proteins, it binds directly to 16S rRNA central domain where it helps coordinate assembly of the platform of the 30S subunit. The sequence is that of Small ribosomal subunit protein uS8 from Wigglesworthia glossinidia brevipalpis.